The primary structure comprises 246 residues: Trypsin V-A (246 aa).

The signal sequence occupies residues 1–15 (MKICIFFTLLGTVAA). Positions 16 to 24 (FPTEDNDDR) are cleaved as a propeptide — activation peptide. The Peptidase S1 domain maps to 25–244 (IVGGYTCQEH…YLNWIHQTIA (220 aa)). 6 disulfide bridges follow: Cys-31-Cys-160, Cys-49-Cys-65, Cys-133-Cys-233, Cys-140-Cys-206, Cys-171-Cys-185, and Cys-196-Cys-220. The active-site Charge relay system is His-64. Ca(2+)-binding residues include Glu-76, Asn-78, and Glu-86. Asp-108 (charge relay system) is an active-site residue. The Charge relay system role is filled by Ser-200.

It belongs to the peptidase S1 family. Ca(2+) serves as cofactor.

Its subcellular location is the secreted. It is found in the extracellular space. It catalyses the reaction Preferential cleavage: Arg-|-Xaa, Lys-|-Xaa.. This chain is Trypsin V-A, found in Rattus norvegicus (Rat).